The following is a 288-amino-acid chain: 4-hydroxy-tetrahydrodipicolinate synthase (288 aa).

Thr-42 is a binding site for pyruvate. Residue Tyr-129 is the Proton donor/acceptor of the active site. The Schiff-base intermediate with substrate role is filled by Lys-158. Residue Ile-200 coordinates pyruvate.

It belongs to the DapA family. In terms of assembly, homotetramer; dimer of dimers.

Its subcellular location is the cytoplasm. The catalysed reaction is L-aspartate 4-semialdehyde + pyruvate = (2S,4S)-4-hydroxy-2,3,4,5-tetrahydrodipicolinate + H2O + H(+). The protein operates within amino-acid biosynthesis; L-lysine biosynthesis via DAP pathway; (S)-tetrahydrodipicolinate from L-aspartate: step 3/4. Its function is as follows. Catalyzes the condensation of (S)-aspartate-beta-semialdehyde [(S)-ASA] and pyruvate to 4-hydroxy-tetrahydrodipicolinate (HTPA). In Thermosipho melanesiensis (strain DSM 12029 / CIP 104789 / BI429), this protein is 4-hydroxy-tetrahydrodipicolinate synthase.